Here is a 132-residue protein sequence, read N- to C-terminus: D-ribose pyranase (132 aa).

Histidine 20 serves as the catalytic Proton donor. Substrate contacts are provided by residues aspartate 28, histidine 99, and 121–123; that span reads YSN.

The protein belongs to the RbsD / FucU family. RbsD subfamily. In terms of assembly, homodecamer.

The protein localises to the cytoplasm. It catalyses the reaction beta-D-ribopyranose = beta-D-ribofuranose. It functions in the pathway carbohydrate metabolism; D-ribose degradation; D-ribose 5-phosphate from beta-D-ribopyranose: step 1/2. Functionally, catalyzes the interconversion of beta-pyran and beta-furan forms of D-ribose. The polypeptide is D-ribose pyranase (Lactococcus lactis subsp. cremoris (strain MG1363)).